A 950-amino-acid chain; its full sequence is Protein lin-54 homolog (950 aa).

5 disordered regions span residues 1–63 (MDTS…DSLN), 366–387 (NASA…TSSG), 500–523 (ASKP…PRKH), 533–552 (KQSA…GPEA), and 638–702 (VENK…LPPG). Residues 10–26 (SLDDTEPLPELSFEDFL) show a composition bias toward acidic residues. The span at 29 to 39 (TSEKSSQHMEI) shows a compositional bias: basic and acidic residues. The span at 40 to 55 (EALDSEEDNIGGEDLA) shows a compositional bias: acidic residues. 4 stretches are compositionally biased toward low complexity: residues 366-386 (NASA…STSS), 500-516 (ASKP…PSAS), 535-548 (SASV…SSDA), and 661-682 (QQQS…QQQL). In terms of domain architecture, CRC spans 737–849 (RRKHCNCSKS…KCVGCRNMED (113 aa)).

The protein belongs to the lin-54 family. Component of the DREAM complex at least composed of Myb, Caf1-55, mip40, mip120, mip130, E2f2, Dp, Rbf, Rbf2, lin-52, HDAC1/Rpd3 and l(3)mbt.

Its subcellular location is the nucleus. In terms of biological role, component of the DREAM complex, a multiprotein complex that can both act as a transcription activator or repressor depending on the context. In follicle cells, the complex plays a central role in the site-specific DNA replication at the chorion loci. During development, the complex represses transcription of developmentally controlled E2F target genes. The protein is Protein lin-54 homolog (mip120) of Drosophila melanogaster (Fruit fly).